The primary structure comprises 137 residues: ATP synthase epsilon chain (137 aa).

Belongs to the ATPase epsilon chain family. In terms of assembly, F-type ATPases have 2 components, CF(1) - the catalytic core - and CF(0) - the membrane proton channel. CF(1) has five subunits: alpha(3), beta(3), gamma(1), delta(1), epsilon(1). CF(0) has three main subunits: a, b and c.

Its subcellular location is the cell membrane. Produces ATP from ADP in the presence of a proton gradient across the membrane. This Streptococcus agalactiae serotype III (strain NEM316) protein is ATP synthase epsilon chain.